A 483-amino-acid chain; its full sequence is Proline--tRNA ligase (483 aa).

It belongs to the class-II aminoacyl-tRNA synthetase family. ProS type 3 subfamily. As to quaternary structure, homodimer.

The protein resides in the cytoplasm. It carries out the reaction tRNA(Pro) + L-proline + ATP = L-prolyl-tRNA(Pro) + AMP + diphosphate. Functionally, catalyzes the attachment of proline to tRNA(Pro) in a two-step reaction: proline is first activated by ATP to form Pro-AMP and then transferred to the acceptor end of tRNA(Pro). The sequence is that of Proline--tRNA ligase from Mycoplasma pneumoniae (strain ATCC 29342 / M129 / Subtype 1) (Mycoplasmoides pneumoniae).